The following is a 1536-amino-acid chain: Glycogen debranching enzyme (1536 aa).

Active-site residues include Asp-535, His-538, and Asp-670.

The protein belongs to the glycogen debranching enzyme family. In terms of assembly, interacts with IGD1.

The protein localises to the mitochondrion. It localises to the cytoplasm. It catalyses the reaction Transfers a segment of a (1-&gt;4)-alpha-D-glucan to a new position in an acceptor, which may be glucose or a (1-&gt;4)-alpha-D-glucan.. The enzyme catalyses Hydrolysis of (1-&gt;6)-alpha-D-glucosidic branch linkages in glycogen phosphorylase limit dextrin.. With respect to regulation, activity is inhibited by IGD1. Multifunctional enzyme acting as 1,4-alpha-D-glucan:1,4-alpha-D-glucan 4-alpha-D-glycosyltransferase and amylo-1,6-glucosidase in glycogen degradation. This chain is Glycogen debranching enzyme (GDB1), found in Saccharomyces cerevisiae (strain ATCC 204508 / S288c) (Baker's yeast).